The sequence spans 516 residues: Bifunctional pantoate ligase/cytidylate kinase (516 aa).

Positions Met-1 to Thr-279 are pantoate--beta-alanine ligase. ATP is bound at residue Met-29–His-36. Residue His-36 is the Proton donor of the active site. Residue Gln-64 participates in (R)-pantoate binding. Beta-alanine is bound at residue Gln-64. Residue Gly-153 to Asp-156 coordinates ATP. Gln-159 contributes to the (R)-pantoate binding site. Tyr-190 to Arg-193 lines the ATP pocket. Positions Phe-280–Ser-516 are cytidylate kinase.

It in the N-terminal section; belongs to the pantothenate synthetase family. The protein in the C-terminal section; belongs to the cytidylate kinase family. Type 1 subfamily.

It localises to the cytoplasm. The enzyme catalyses (R)-pantoate + beta-alanine + ATP = (R)-pantothenate + AMP + diphosphate + H(+). It carries out the reaction CMP + ATP = CDP + ADP. The catalysed reaction is dCMP + ATP = dCDP + ADP. It participates in cofactor biosynthesis; (R)-pantothenate biosynthesis; (R)-pantothenate from (R)-pantoate and beta-alanine: step 1/1. Functionally, catalyzes the condensation of pantoate with beta-alanine in an ATP-dependent reaction via a pantoyl-adenylate intermediate. Catalyzes the transfer of a phosphate group from ATP to either CMP or dCMP to form CDP or dCDP and ADP, respectively. The polypeptide is Bifunctional pantoate ligase/cytidylate kinase (Prochlorococcus marinus (strain NATL2A)).